The primary structure comprises 361 residues: MIGFAPVSTPDAAAEAAARARQDSLTKPRGALGSLEDLSVWVASCQQRCPPRQFERARVVVFAGDHGVARSGVSAYPPEVTAQMVANIDAGGAAINALADVAGATVRVADLAVDADPLSERIGAHKVRRGSGNIATEDALTNDETAAAITAGQQIADEEVDAGADLLIAGDMGIGNTTAAAVLVAALTDAEPVAVVGFGTGIDDAGWARKTAAVRDALFRVRPVLPDPVGLLRCAGGADLAAIAGFCAQAAVRRTPLLLDGVAVTAAALVAERLAPGAHRWWQAGHRSSEPGHGLALAALGLDPIVDLHMRLGEGTGAAVALMVLRAAVAALSSMATFTEAGVSTRSVDGVDRTAPPAVSP.

Catalysis depends on glutamate 314, which acts as the Proton acceptor.

It belongs to the CobT family.

The catalysed reaction is 5,6-dimethylbenzimidazole + nicotinate beta-D-ribonucleotide = alpha-ribazole 5'-phosphate + nicotinate + H(+). It participates in nucleoside biosynthesis; alpha-ribazole biosynthesis; alpha-ribazole from 5,6-dimethylbenzimidazole: step 1/2. Its function is as follows. Catalyzes the synthesis of alpha-ribazole-5'-phosphate from nicotinate mononucleotide (NAMN) and 5,6-dimethylbenzimidazole (DMB). The sequence is that of Nicotinate-nucleotide--dimethylbenzimidazole phosphoribosyltransferase from Mycobacterium bovis (strain BCG / Pasteur 1173P2).